The chain runs to 494 residues: Adenosylhomocysteinase (494 aa).

Substrate-binding residues include threonine 72, aspartate 155, and glutamate 217. Residue 218 to 220 participates in NAD(+) binding; that stretch reads TTT. Residues lysine 247 and aspartate 251 each contribute to the substrate site. NAD(+)-binding positions include asparagine 252, 281–286, glutamate 304, asparagine 339, 360–362, and asparagine 408; these read GYGDVG and IGH.

It belongs to the adenosylhomocysteinase family. The cofactor is NAD(+).

It localises to the cytoplasm. It carries out the reaction S-adenosyl-L-homocysteine + H2O = L-homocysteine + adenosine. It functions in the pathway amino-acid biosynthesis; L-homocysteine biosynthesis; L-homocysteine from S-adenosyl-L-homocysteine: step 1/1. In terms of biological role, may play a key role in the regulation of the intracellular concentration of adenosylhomocysteine. The chain is Adenosylhomocysteinase from Nocardia farcinica (strain IFM 10152).